We begin with the raw amino-acid sequence, 452 residues long: Bifunctional protein GlmU (452 aa).

A pyrophosphorylase region spans residues 1 to 226 (MKNIHAIILA…KFEIAGVNDK (226 aa)). Residues 9 to 12 (LAAG), lysine 23, glutamine 73, 78 to 79 (GT), 100 to 102 (YGD), glycine 137, glutamate 151, asparagine 166, and asparagine 224 each bind UDP-N-acetyl-alpha-D-glucosamine. Aspartate 102 lines the Mg(2+) pocket. Position 224 (asparagine 224) interacts with Mg(2+). The tract at residues 227 to 247 (VQLAELERIFQINQATQFMQQ) is linker. An N-acetyltransferase region spans residues 248-452 (GLSLKDPNRF…LKNWQRPTKK (205 aa)). 2 residues coordinate UDP-N-acetyl-alpha-D-glucosamine: arginine 330 and lysine 348. Histidine 360 (proton acceptor) is an active-site residue. 2 residues coordinate UDP-N-acetyl-alpha-D-glucosamine: tyrosine 363 and asparagine 374. Acetyl-CoA is bound by residues alanine 377, 383–384 (NY), serine 402, alanine 420, and arginine 437.

This sequence in the N-terminal section; belongs to the N-acetylglucosamine-1-phosphate uridyltransferase family. The protein in the C-terminal section; belongs to the transferase hexapeptide repeat family. In terms of assembly, homotrimer. Mg(2+) is required as a cofactor.

It is found in the cytoplasm. The catalysed reaction is alpha-D-glucosamine 1-phosphate + acetyl-CoA = N-acetyl-alpha-D-glucosamine 1-phosphate + CoA + H(+). It catalyses the reaction N-acetyl-alpha-D-glucosamine 1-phosphate + UTP + H(+) = UDP-N-acetyl-alpha-D-glucosamine + diphosphate. It participates in nucleotide-sugar biosynthesis; UDP-N-acetyl-alpha-D-glucosamine biosynthesis; N-acetyl-alpha-D-glucosamine 1-phosphate from alpha-D-glucosamine 6-phosphate (route II): step 2/2. The protein operates within nucleotide-sugar biosynthesis; UDP-N-acetyl-alpha-D-glucosamine biosynthesis; UDP-N-acetyl-alpha-D-glucosamine from N-acetyl-alpha-D-glucosamine 1-phosphate: step 1/1. Its pathway is bacterial outer membrane biogenesis; LPS lipid A biosynthesis. In terms of biological role, catalyzes the last two sequential reactions in the de novo biosynthetic pathway for UDP-N-acetylglucosamine (UDP-GlcNAc). The C-terminal domain catalyzes the transfer of acetyl group from acetyl coenzyme A to glucosamine-1-phosphate (GlcN-1-P) to produce N-acetylglucosamine-1-phosphate (GlcNAc-1-P), which is converted into UDP-GlcNAc by the transfer of uridine 5-monophosphate (from uridine 5-triphosphate), a reaction catalyzed by the N-terminal domain. This is Bifunctional protein GlmU from Ruthia magnifica subsp. Calyptogena magnifica.